The primary structure comprises 81 residues: NAD(P)H-quinone oxidoreductase subunit O (81 aa).

It belongs to the complex I NdhO subunit family. In terms of assembly, NDH-1 can be composed of about 15 different subunits; different subcomplexes with different compositions have been identified which probably have different functions.

The protein resides in the cellular thylakoid membrane. It carries out the reaction a plastoquinone + NADH + (n+1) H(+)(in) = a plastoquinol + NAD(+) + n H(+)(out). The catalysed reaction is a plastoquinone + NADPH + (n+1) H(+)(in) = a plastoquinol + NADP(+) + n H(+)(out). Its function is as follows. NDH-1 shuttles electrons from an unknown electron donor, via FMN and iron-sulfur (Fe-S) centers, to quinones in the respiratory and/or the photosynthetic chain. The immediate electron acceptor for the enzyme in this species is believed to be plastoquinone. Couples the redox reaction to proton translocation, and thus conserves the redox energy in a proton gradient. Cyanobacterial NDH-1 also plays a role in inorganic carbon-concentration. The sequence is that of NAD(P)H-quinone oxidoreductase subunit O from Prochlorococcus marinus (strain MIT 9303).